Reading from the N-terminus, the 919-residue chain is Exostosin-like 3 (919 aa).

Topologically, residues Met-1–Thr-30 are cytoplasmic. Positions Met-1–His-140 are required for interaction with REG3A. The helical; Signal-anchor for type II membrane protein transmembrane segment at Trp-31–Leu-51 threads the bilayer. Residues Thr-52–Ile-919 lie on the Lumenal side of the membrane. 2 cysteine pairs are disulfide-bonded: Cys-177–Cys-182 and Cys-188–Cys-236. N-linked (GlcNAc...) asparagine glycosylation occurs at Asn-290. The residue at position 362 (Ser-362) is a Phosphoserine. The cysteines at positions 400 and 415 are disulfide-linked. A glycan (N-linked (GlcNAc...) asparagine) is linked at Asn-592. Residues Leu-668, Arg-672, Asn-697, Asn-723, Arg-728, Asp-744, Asp-745, and Asp-746 each coordinate UDP-N-acetyl-alpha-D-glucosamine. A Mn(2+)-binding site is contributed by Asp-746. The N-linked (GlcNAc...) asparagine glycan is linked to Asn-790. Cysteines 831 and 879 form a disulfide. Positions 832, 833, and 876 each coordinate UDP-N-acetyl-alpha-D-glucosamine. Asp-833 is a catalytic residue.

The protein belongs to the glycosyltransferase 47 family. As to quaternary structure, homodimer; disulfide-linked. Interacts with REG3A. It depends on Mn(2+) as a cofactor. In terms of tissue distribution, ubiquitous. Expressed in keratinocytes. Expressed in pancreas.

The protein resides in the endoplasmic reticulum membrane. The protein localises to the golgi apparatus. It localises to the cell membrane. It is found in the nucleus. It catalyses the reaction 3-O-(beta-D-GlcA-(1-&gt;3)-beta-D-Gal-(1-&gt;3)-beta-D-Gal-(1-&gt;4)-beta-D-Xyl)-L-seryl-[protein] + UDP-N-acetyl-alpha-D-glucosamine = 3-O-(alpha-D-GlcNAc-(1-&gt;4)-beta-D-GlcA-(1-&gt;3)-beta-D-Gal-(1-&gt;3)-beta-D-Gal-(1-&gt;4)-beta-D-Xyl)-L-seryl-[protein] + UDP + H(+). The protein operates within glycan metabolism; heparan sulfate biosynthesis. Its function is as follows. Glycosyltransferase which regulates the biosynthesis of heparan sulfate (HS). Initiates HS synthesis by transferring the first N-acetyl-alpha-D-glucosamine (alpha-GlcNAc) residue (GlcNAcT-I activity) to the tetrasaccharide linker (GlcA-Gal-Gal-Xyl-)Ser core linker. May also transfer alpha-GlcNAc residues during HS elongation (GlcNAcT-II activity). Lacks glucuronyl transferase II (GlcAT-II) activity. Important for both skeletal development and hematopoiesis, through the formation of HS proteoglycans (HSPGs). Through the synthesis of HS, regulates postnatal pancreatic islet maturation and insulin secretion. Functionally, receptor for REG3A, REG3B and REG3G, induces the activation of downstream signaling pathways such as PI3K-AKT or RAS-RAF-MEK-ERK signaling pathway. Required for the function of REG3A in regulating keratinocyte proliferation and differentiation. Required for the inhibition of skin inflammation mediated by REG3A through the activation of PI3K-AKT-STAT3 pathway. Required for the function of REG3A and REG3G in glucose tolerance in pancreas. Expressed in microglia, is activated by nociceptor-derived REG3G in response to endotoxins, leading to the inhibition of kynurenine pathway to prevent endotoxic death. The protein is Exostosin-like 3 of Homo sapiens (Human).